Reading from the N-terminus, the 644-residue chain is Alkyldihydroxyacetonephosphate synthase, peroxisomal (644 aa).

The N-terminal 44 residues, 1–44, are a transit peptide targeting the peroxisome; sequence MAEAAGEAGASERDPDAVRARRRLRVLSGHLLGRPQEAPSTNEC. A disordered region spans residues 1 to 70; the sequence is MAEAAGEAGA…PAAPESGTIP (70 aa). The segment covering 10–19 has biased composition (basic and acidic residues); that stretch reads ASERDPDAVR. The span at 49–64 shows a compositional bias: low complexity; it reads AASAAGASPAASPAAP. Phosphoserine is present on residues S51 and S56. K88 is subject to N6-acetyllysine. One can recognise an FAD-binding PCMH-type domain in the interval 188–370; that stretch reads FERIPDIVVW…TEATIKIRPT (183 aa). FAD is bound by residues 220 to 226, 289 to 295, and 302 to 305; these read PIGGGTS, DSLEFSI, and TRAS. K333 is subject to N6-acetyllysine. FAD is bound at residue 354-360; that stretch reads EGTLGVI. Residue R501 participates in substrate binding. The active-site Proton donor/acceptor is Y564. 2 important for enzyme activity regions span residues 601–603 and 640–644; these read HHH and NRNLL.

It belongs to the FAD-binding oxidoreductase/transferase type 4 family. Homodimer. FAD serves as cofactor.

Its subcellular location is the peroxisome membrane. The protein resides in the peroxisome. The catalysed reaction is a long chain fatty alcohol + a 1-acylglycerone 3-phosphate = a 1-O-alkylglycerone 3-phosphate + a long-chain fatty acid + H(+). It carries out the reaction hexadecan-1-ol + 1-hexadecanoylglycerone 3-phosphate = 1-O-hexadecylglycerone 3-phosphate + hexadecanoate + H(+). The enzyme catalyses 1-hexadecanoylglycerone 3-phosphate + a long-chain fatty acid = a 1-acylglycerone 3-phosphate + hexadecanoate. Its pathway is glycerolipid metabolism; ether lipid biosynthesis. Its activity is regulated as follows. Inhibited by divalent cation Mg(2+). In terms of biological role, catalyzes the exchange of the acyl chain in acyl-dihydroxyacetonephosphate (acyl-DHAP) for a long chain fatty alcohol, yielding the first ether linked intermediate, i.e. alkyl-dihydroxyacetonephosphate (alkyl-DHAP), in the pathway of ether lipid biosynthesis. This is Alkyldihydroxyacetonephosphate synthase, peroxisomal (Agps) from Rattus norvegicus (Rat).